The chain runs to 256 residues: Thiazole synthase (256 aa).

The Schiff-base intermediate with DXP role is filled by Lys95. 1-deoxy-D-xylulose 5-phosphate contacts are provided by residues Gly156, 182–183 (AG), and 204–205 (NT).

Belongs to the ThiG family. In terms of assembly, homotetramer. Forms heterodimers with either ThiH or ThiS.

Its subcellular location is the cytoplasm. The enzyme catalyses [ThiS sulfur-carrier protein]-C-terminal-Gly-aminoethanethioate + 2-iminoacetate + 1-deoxy-D-xylulose 5-phosphate = [ThiS sulfur-carrier protein]-C-terminal Gly-Gly + 2-[(2R,5Z)-2-carboxy-4-methylthiazol-5(2H)-ylidene]ethyl phosphate + 2 H2O + H(+). The protein operates within cofactor biosynthesis; thiamine diphosphate biosynthesis. In terms of biological role, catalyzes the rearrangement of 1-deoxy-D-xylulose 5-phosphate (DXP) to produce the thiazole phosphate moiety of thiamine. Sulfur is provided by the thiocarboxylate moiety of the carrier protein ThiS. In vitro, sulfur can be provided by H(2)S. This Idiomarina loihiensis (strain ATCC BAA-735 / DSM 15497 / L2-TR) protein is Thiazole synthase.